We begin with the raw amino-acid sequence, 379 residues long: Succinyl-diaminopimelate desuccinylase (379 aa).

Residue histidine 70 coordinates Zn(2+). Residue aspartate 72 is part of the active site. Aspartate 103 lines the Zn(2+) pocket. Glutamate 137 acts as the Proton acceptor in catalysis. 3 residues coordinate Zn(2+): glutamate 138, glutamate 166, and histidine 352.

Belongs to the peptidase M20A family. DapE subfamily. In terms of assembly, homodimer. Zn(2+) serves as cofactor. It depends on Co(2+) as a cofactor.

It catalyses the reaction N-succinyl-(2S,6S)-2,6-diaminopimelate + H2O = (2S,6S)-2,6-diaminopimelate + succinate. It functions in the pathway amino-acid biosynthesis; L-lysine biosynthesis via DAP pathway; LL-2,6-diaminopimelate from (S)-tetrahydrodipicolinate (succinylase route): step 3/3. In terms of biological role, catalyzes the hydrolysis of N-succinyl-L,L-diaminopimelic acid (SDAP), forming succinate and LL-2,6-diaminopimelate (DAP), an intermediate involved in the bacterial biosynthesis of lysine and meso-diaminopimelic acid, an essential component of bacterial cell walls. This Burkholderia mallei (strain NCTC 10247) protein is Succinyl-diaminopimelate desuccinylase.